The following is a 505-amino-acid chain: Ribosomal RNA small subunit methyltransferase F (505 aa).

S-adenosyl-L-methionine contacts are provided by residues 123 to 129, E147, D174, and D192; that span reads ASAPGSK. C245 serves as the catalytic Nucleophile. The segment at 409–437 is disordered; sequence GTNANNNSNTNPNNNANTNPNNNSNTNPR. Positions 410–435 are enriched in low complexity; sequence TNANNNSNTNPNNNANTNPNNNSNTN.

The protein belongs to the class I-like SAM-binding methyltransferase superfamily. RsmB/NOP family.

It is found in the cytoplasm. The enzyme catalyses cytidine(1407) in 16S rRNA + S-adenosyl-L-methionine = 5-methylcytidine(1407) in 16S rRNA + S-adenosyl-L-homocysteine + H(+). Functionally, specifically methylates the cytosine at position 1407 (m5C1407) of 16S rRNA. This chain is Ribosomal RNA small subunit methyltransferase F, found in Shewanella denitrificans (strain OS217 / ATCC BAA-1090 / DSM 15013).